Here is a 315-residue protein sequence, read N- to C-terminus: 4-hydroxy-3-methylbut-2-enyl diphosphate reductase (315 aa).

C12 is a binding site for [4Fe-4S] cluster. Residues H41 and H74 each contribute to the (2E)-4-hydroxy-3-methylbut-2-enyl diphosphate site. Residues H41 and H74 each contribute to the dimethylallyl diphosphate site. H41 and H74 together coordinate isopentenyl diphosphate. A [4Fe-4S] cluster-binding site is contributed by C96. Position 124 (H124) interacts with (2E)-4-hydroxy-3-methylbut-2-enyl diphosphate. H124 is a binding site for dimethylallyl diphosphate. H124 contributes to the isopentenyl diphosphate binding site. The Proton donor role is filled by E126. (2E)-4-hydroxy-3-methylbut-2-enyl diphosphate is bound at residue T168. C198 contributes to the [4Fe-4S] cluster binding site. 4 residues coordinate (2E)-4-hydroxy-3-methylbut-2-enyl diphosphate: S226, S227, N228, and S270. Dimethylallyl diphosphate is bound by residues S226, S227, N228, and S270. Isopentenyl diphosphate-binding residues include S226, S227, N228, and S270.

It belongs to the IspH family. The cofactor is [4Fe-4S] cluster.

The catalysed reaction is isopentenyl diphosphate + 2 oxidized [2Fe-2S]-[ferredoxin] + H2O = (2E)-4-hydroxy-3-methylbut-2-enyl diphosphate + 2 reduced [2Fe-2S]-[ferredoxin] + 2 H(+). It catalyses the reaction dimethylallyl diphosphate + 2 oxidized [2Fe-2S]-[ferredoxin] + H2O = (2E)-4-hydroxy-3-methylbut-2-enyl diphosphate + 2 reduced [2Fe-2S]-[ferredoxin] + 2 H(+). Its pathway is isoprenoid biosynthesis; dimethylallyl diphosphate biosynthesis; dimethylallyl diphosphate from (2E)-4-hydroxy-3-methylbutenyl diphosphate: step 1/1. The protein operates within isoprenoid biosynthesis; isopentenyl diphosphate biosynthesis via DXP pathway; isopentenyl diphosphate from 1-deoxy-D-xylulose 5-phosphate: step 6/6. In terms of biological role, catalyzes the conversion of 1-hydroxy-2-methyl-2-(E)-butenyl 4-diphosphate (HMBPP) into a mixture of isopentenyl diphosphate (IPP) and dimethylallyl diphosphate (DMAPP). Acts in the terminal step of the DOXP/MEP pathway for isoprenoid precursor biosynthesis. The protein is 4-hydroxy-3-methylbut-2-enyl diphosphate reductase of Azotobacter vinelandii (strain DJ / ATCC BAA-1303).